We begin with the raw amino-acid sequence, 637 residues long: Delta(14)-sterol reductase LBR (637 aa).

The 62-residue stretch at 1-62 folds into the Tudor domain; the sequence is MPNRKYADGE…DIRLQSSFKQ (62 aa). Over 1 to 205 the chain is Nuclear; it reads MPNRKYADGE…KTKELEFGGR (205 aa). The segment covering 57-73 has biased composition (low complexity); sequence QSSFKQRKSQSSSSSPS. A disordered region spans residues 57-151; it reads QSSFKQRKSQ…SKLLEQQKLK (95 aa). Positions 74–97 are enriched in basic residues; sequence RRSRSRSRSRSPGRPAKGRRRSSS. A phosphoserine; by PKA mark is found at Ser-95 and Ser-96. 2 stretches are compositionally biased toward basic and acidic residues: residues 98-110 and 124-151; these read HSRE…KKII and NTRR…QKLK. Transmembrane regions (helical) follow at residues 206–226, 250–270, 288–309, 317–338, 378–399, 403–425, 466–486, and 554–574; these read FGTF…VLMC, VFGV…LPIG, INGF…YFQF, HFVQ…YLYI, YFCE…MLLA, IHNQ…LYVV, FYLV…ITIL, and PCGF…CLLV.

It belongs to the ERG4/ERG24 family. As to quaternary structure, interacts with DNA. Interaction with DNA is sequence independent with higher affinity for supercoiled and relaxed circular DNA than linear DNA.

It localises to the nucleus inner membrane. The protein localises to the nucleus. It is found in the cytoplasm. Its subcellular location is the endoplasmic reticulum membrane. It catalyses the reaction 5alpha-cholest-8,14-dien-3beta-ol + NADPH + H(+) = 5alpha-cholest-8-en-3beta-ol + NADP(+). The enzyme catalyses 4,4-dimethyl-5alpha-cholesta-8,24-dien-3beta-ol + NADP(+) = 4,4-dimethyl-5alpha-cholesta-8,14,24-trien-3beta-ol + NADPH + H(+). It carries out the reaction 4,4-dimethyl-8,14-cholestadien-3beta-ol + NADPH + H(+) = 4,4-dimethyl-5alpha-cholest-8-en-3beta-ol + NADP(+). It functions in the pathway steroid biosynthesis; cholesterol biosynthesis. Its function is as follows. Catalyzes the reduction of the C14-unsaturated bond of lanosterol, as part of the metabolic pathway leading to cholesterol biosynthesis. Anchors the lamina and the heterochromatin to the inner nuclear membrane. The protein is Delta(14)-sterol reductase LBR (LBR) of Gallus gallus (Chicken).